The sequence spans 441 residues: SVGFKAGVKDYKLTYYTPAYQTLDTDILAAFRVTPQPGVPPEEAGAAVAAESSTGTWTTVWTDGLTSLDRYKGRCYHIEPVAGEENQYIVYVAYPLDLFEEGSVTNMFTSIVGNVFGFKALRALRLEDLRIPPAYTKTFQGPPHGIQVERDKLNKYGRPLLGCTIKPKLGLSAKNYGRAVYECLRGGLDFTKDDENVNSQPFMRWRDRFLFCAEAIYKAQAQTGEIKGHYLNATAGTCEEMIKRAVFARELGVPIVMHDYLTGGFTANTTLAHYCRDNGLLLHIHRAMHAVIDRQKNHGIHFRVLAKALRLSGGDHIHSGTVVGKLEGERDITLGFVDLLRDDYIEKDRSRGIYFSQYWVSIPGVLPVASGGIHVWHMPALTEIFGDDSVLQFGGGTLGHPWGNAPGAVANRVALEACVQARNEGLDLAREGNEIIRKARK.

Residue lysine 5 is modified to N6,N6,N6-trimethyllysine. Substrate contacts are provided by asparagine 114 and threonine 164. The active-site Proton acceptor is the lysine 166. Residue lysine 168 coordinates substrate. Positions 192, 194, and 195 each coordinate Mg(2+). Lysine 192 bears the N6-carboxylysine mark. Histidine 285 serves as the catalytic Proton acceptor. Substrate-binding residues include arginine 286, histidine 318, and serine 370.

It belongs to the RuBisCO large chain family. Type I subfamily. Heterohexadecamer of 8 large chains and 8 small chains; disulfide-linked. The disulfide link is formed within the large subunit homodimers. Mg(2+) serves as cofactor. In terms of processing, the disulfide bond which can form in the large chain dimeric partners within the hexadecamer appears to be associated with oxidative stress and protein turnover.

It localises to the plastid. The protein localises to the chloroplast. It carries out the reaction 2 (2R)-3-phosphoglycerate + 2 H(+) = D-ribulose 1,5-bisphosphate + CO2 + H2O. The catalysed reaction is D-ribulose 1,5-bisphosphate + O2 = 2-phosphoglycolate + (2R)-3-phosphoglycerate + 2 H(+). Its function is as follows. RuBisCO catalyzes two reactions: the carboxylation of D-ribulose 1,5-bisphosphate, the primary event in carbon dioxide fixation, as well as the oxidative fragmentation of the pentose substrate in the photorespiration process. Both reactions occur simultaneously and in competition at the same active site. This chain is Ribulose bisphosphate carboxylase large chain, found in Drosera dichrosepala (Rusty sundew).